The sequence spans 939 residues: Collagen-like protein 3 (939 aa).

N-linked (GlcNAc...) asparagine; by host glycans are attached at residues Asn-15, Asn-35, Asn-39, and Asn-82. Residues 84 to 95 (SGSSGPSGPQGP) are compositionally biased toward low complexity. Disordered stretches follow at residues 84–332 (SGSS…DLGN) and 358–697 (SIKG…KGEA). 8 consecutive Collagen-like domains span residues 88 to 147 (GPSG…NGDK), 148 to 207 (GNKG…KGDK), 211 to 330 (GNKG…SPDL), 364 to 423 (GDKG…SGAD), 427 to 486 (GDKG…KGEK), 493 to 552 (GESG…KGSK), 564 to 622 (GDKG…KGDV), and 638 to 697 (GDKG…KGEA). 13 stretches are compositionally biased toward basic and acidic residues: residues 96 to 110 (KGEK…DKGE), 123 to 182 (DADK…DPGI), 189 to 230 (DADK…DIGL), 237 to 260 (DADK…DIGP), 267 to 288 (DADK…KGTK), 297 to 314 (KGDK…DKGE), 360 to 371 (KGDKGDKGDTGL), 378 to 416 (DADK…DTGL), 423 to 491 (DADK…DVGI), 498 to 527 (DADK…DTGI), 537 to 552 (KGDK…KGSK), 560 to 580 (KGDK…DIGI), and 589 to 684 (KGDK…DKGD). N-linked (GlcNAc...) asparagine; by host glycosylation is found at Asn-788, Asn-820, Asn-858, Asn-919, and Asn-925. A disordered region spans residues 896–923 (NGETGAPTTDSGTNYGAGGGGGGNGTQG). Residues 910–923 (YGAGGGGGGNGTQG) are compositionally biased toward gly residues.

Post-translationally, may be hydroxylated on lysine by the viral-encoded procollagen-lysine,2-oxoglutarate 5-dioxygenase.

The protein localises to the virion. Functionally, may participate in the formation of a layer of cross-linked glycosylated fibrils at the viral surface thus giving it a hairy-like appearance. The protein is Collagen-like protein 3 of Acanthamoeba polyphaga (Amoeba).